The following is a 236-amino-acid chain: Small ribosomal subunit protein uS2c (236 aa).

It belongs to the universal ribosomal protein uS2 family.

It is found in the plastid. Its subcellular location is the chloroplast. The chain is Small ribosomal subunit protein uS2c (rps2) from Panax ginseng (Korean ginseng).